A 146-amino-acid chain; its full sequence is Hemoglobin subunit beta (146 aa).

Residue V1 is modified to N-acetylvaline. Positions 2 to 146 (HLTDAEKALV…VATALAHKYH (145 aa)) constitute a Globin domain. T12 carries the post-translational modification Phosphothreonine. S44 carries the phosphoserine modification. K59 carries the post-translational modification N6-acetyllysine. H63 serves as a coordination point for heme b. At K82 the chain carries N6-acetyllysine. Residue H92 coordinates heme b. C93 is subject to S-nitrosocysteine. Residue K144 is modified to N6-acetyllysine.

Belongs to the globin family. As to quaternary structure, heterotetramer of two alpha chains and two beta chains. In terms of tissue distribution, red blood cells.

Involved in oxygen transport from the lung to the various peripheral tissues. In Peromyscus crinitus (Canyon mouse), this protein is Hemoglobin subunit beta.